A 556-amino-acid polypeptide reads, in one-letter code: 2-succinyl-5-enolpyruvyl-6-hydroxy-3-cyclohexene-1-carboxylate synthase (556 aa).

This sequence belongs to the TPP enzyme family. MenD subfamily. In terms of assembly, homodimer. Mg(2+) is required as a cofactor. Mn(2+) serves as cofactor. The cofactor is thiamine diphosphate.

The enzyme catalyses isochorismate + 2-oxoglutarate + H(+) = 5-enolpyruvoyl-6-hydroxy-2-succinyl-cyclohex-3-ene-1-carboxylate + CO2. It participates in quinol/quinone metabolism; 1,4-dihydroxy-2-naphthoate biosynthesis; 1,4-dihydroxy-2-naphthoate from chorismate: step 2/7. The protein operates within quinol/quinone metabolism; menaquinone biosynthesis. Its function is as follows. Catalyzes the thiamine diphosphate-dependent decarboxylation of 2-oxoglutarate and the subsequent addition of the resulting succinic semialdehyde-thiamine pyrophosphate anion to isochorismate to yield 2-succinyl-5-enolpyruvyl-6-hydroxy-3-cyclohexene-1-carboxylate (SEPHCHC). This chain is 2-succinyl-5-enolpyruvyl-6-hydroxy-3-cyclohexene-1-carboxylate synthase, found in Salmonella gallinarum (strain 287/91 / NCTC 13346).